The chain runs to 581 residues: Neither inactivation nor afterpotential protein G (581 aa).

Positions 1-26 (MGMKFQKILVLAGIVIGFLSIIVVLA) are cleaved as a signal peptide. 48–77 (DYVIVGGGTGGSTLTSLLAKNSNGSVLLIE) is a binding site for FAD. Residues asparagine 70, asparagine 156, asparagine 404, and asparagine 464 are each glycosylated (N-linked (GlcNAc...) asparagine). Histidine 516 (proton acceptor) is an active-site residue.

Belongs to the GMC oxidoreductase family. Requires FAD as cofactor.

The protein resides in the secreted. Functionally, oxidoreductase involved in biosynthesis of 3-hydroxyretinal, a chromophore for rhodopsin Rh1. Not responsible for the initial hydroxylation of the retinal ring but rather acts in a subsequent step in chromophore production. May catalyze the conversion of (3R)-3-hydroxyretinol to the 3S enantiomer. This Drosophila melanogaster (Fruit fly) protein is Neither inactivation nor afterpotential protein G (ninaG).